The primary structure comprises 137 residues: MPSRRTGITTEDAITKYSVKAKTEQTAYKNATKDMVVQAQNIMNFYSVVNQALIPWLNAHGVGGNLRILYRQLANEYVKVLNTKQSGEVIKRLKIALRHKYWLRGLDEAMLDEFMDYIDSLKSTTTNYIIFNMQSSK.

Heterodimer composed of major capsid protein VP4 and major capsid protein VP5.

It is found in the virion. Self-assembles to form a helical, filamentous nucleocapsid. Together with capsid protein 2, wraps arounds the DNA and maintains it in an A-form. Capsid proteins probably maintain the DNA in A-form by non-specific desolvation and specific coordination of the DNA phosphate groups by positively charged residues. This certainly protects the viral DNA under conditions such as the extreme desiccation of its host. This chain is Major capsid protein VP4, found in Saccharolobus shibatae (SFV1).